The sequence spans 68 residues: Basic phospholipase A2 homolog BdipTx-I (68 aa).

The cysteines at positions 28 and 44 are disulfide-linked.

It belongs to the phospholipase A2 family. Group II subfamily. K49 sub-subfamily. Expressed by the venom gland.

Its subcellular location is the secreted. In terms of biological role, snake venom phospholipase A2 (PLA2) that lacks enzymatic activity. Is myotoxic, induces edema, and causes systemic effects (renal changes that lead to proteinuria) on mice. A model of myotoxic mechanism has been proposed: an apo Lys49-PLA2 is activated by the entrance of a hydrophobic molecule (e.g. fatty acid) at the hydrophobic channel of the protein leading to a reorientation of a monomer. This reorientation causes a transition between 'inactive' to 'active' states, causing alignment of C-terminal and membrane-docking sites (MDoS) side-by-side and putting the membrane-disruption sites (MDiS) in the same plane, exposed to solvent and in a symmetric position for both monomers. The MDoS region stabilizes the toxin on membrane by the interaction of charged residues with phospholipid head groups. Subsequently, the MDiS region destabilizes the membrane with penetration of hydrophobic residues. This insertion causes a disorganization of the membrane, allowing an uncontrolled influx of ions (i.e. calcium and sodium), and eventually triggering irreversible intracellular alterations and cell death. The sequence is that of Basic phospholipase A2 homolog BdipTx-I from Bothrops diporus (Chaco lancehead).